The following is a 439-amino-acid chain: Probable non-inhibitory serpin-Z9 (439 aa).

The tract at residues 12–44 is disordered; the sequence is RRPPFPAGDANHRRLSSAPAPKPEAPAEAMPPP. A compositionally biased stretch (pro residues) spans 31-44; sequence APKPEAPAEAMPPP. The interval 389-413 is RCL; that stretch reads GIEETSVSMGLGKPLPAQHFKADHP.

This sequence belongs to the serpin family.

In Oryza sativa subsp. japonica (Rice), this protein is Probable non-inhibitory serpin-Z9.